We begin with the raw amino-acid sequence, 182 residues long: Large ribosomal subunit protein uL6 (182 aa).

It belongs to the universal ribosomal protein uL6 family. In terms of assembly, part of the 50S ribosomal subunit.

This protein binds to the 23S rRNA, and is important in its secondary structure. It is located near the subunit interface in the base of the L7/L12 stalk, and near the tRNA binding site of the peptidyltransferase center. This is Large ribosomal subunit protein uL6 from Nostoc punctiforme (strain ATCC 29133 / PCC 73102).